The primary structure comprises 320 residues: MITHLKNWPRLLNRFVLQLKNARHSIHQFTHLAGRLQRPPKSGKSSRDPYLVTAVQGRSKKPRYPGERANQRFGEDSWFVSSTPLAEVMGVADGVGGWRDVGVDAGRFAKELMTCCSGQTQRSGFDGRSARNLLIAGFQELTHREQPVVGSSTACLATMHRRDCILYTANLGDSGFLVVRNGRVLHRSVEQTHDFNTPYQLTVPPADRQDCYYCDKPEMAVSTRHSLLPGDLVLLATDGLFDNMPESMLLKILNGLKERGERDLLQGASQVVEKARELSLNATFQSPFAIKARQHNVPYSGGGKPDDITLILASVEVPRA.

In terms of domain architecture, PPM-type phosphatase spans Pro-49 to Val-315. Asp-93, Gly-94, and Asp-238 together coordinate Mn(2+).

This sequence belongs to the PP2C family. Mg(2+) is required as a cofactor. It depends on Mn(2+) as a cofactor.

It carries out the reaction O-phospho-L-seryl-[protein] + H2O = L-seryl-[protein] + phosphate. The enzyme catalyses O-phospho-L-threonyl-[protein] + H2O = L-threonyl-[protein] + phosphate. The protein is Protein phosphatase PTC7 homolog fig of Drosophila yakuba (Fruit fly).